A 247-amino-acid chain; its full sequence is Carboxy-S-adenosyl-L-methionine synthase (247 aa).

S-adenosyl-L-methionine-binding positions include Y39, D89–N90, D117–I118, N132, and R199.

It belongs to the class I-like SAM-binding methyltransferase superfamily. Cx-SAM synthase family. Homodimer.

It catalyses the reaction prephenate + S-adenosyl-L-methionine = carboxy-S-adenosyl-L-methionine + 3-phenylpyruvate + H2O. Functionally, catalyzes the conversion of S-adenosyl-L-methionine (SAM) to carboxy-S-adenosyl-L-methionine (Cx-SAM). The protein is Carboxy-S-adenosyl-L-methionine synthase of Sodalis glossinidius (strain morsitans).